We begin with the raw amino-acid sequence, 297 residues long: ABSCISIC ACID-INSENSITIVE 5-like protein 2 (297 aa).

Ser21, Ser43, and Ser81 each carry phosphoserine. 2 disordered regions span residues Ile100–Leu119 and Ile138–Gly157. Thr118 is modified (phosphothreonine). Gly residues predominate over residues Pro146–Gly157. In terms of domain architecture, bZIP spans Val225–Gln288. The segment at Arg227–Lys246 is basic motif. A leucine-zipper region spans residues Leu253 to Leu267. Positions Glu272 to Phe297 are disordered.

The protein belongs to the bZIP family. ABI5 subfamily. DNA-binding heterodimer with ABI5/DPBF1, DPBF2 or EEL/DPBF4. Interacts with the AFP proteins AFP1, AFP2, AFP3 and AFP4. In terms of tissue distribution, predominantly expressed in seeds.

The protein localises to the nucleus. Its function is as follows. Binds to the embryo specification element and the ABA-responsive element (ABRE) of the Dc3 gene promoter. Could participate in abscisic acid-regulated gene expression during seed development. The sequence is that of ABSCISIC ACID-INSENSITIVE 5-like protein 2 (DPBF3) from Arabidopsis thaliana (Mouse-ear cress).